Consider the following 456-residue polypeptide: Probable serine incorporator (456 aa).

The next 11 membrane-spanning stretches (helical) occupy residues 10-32 (AASC…CCNF), 44-64 (IVYS…LAPG), 95-115 (VCFG…GVTS), 126-146 (GFWG…FFIP), 153-173 (VWMY…LVLL), 195-215 (VWAV…VAGI), 234-254 (KFFI…AIHP), 265-285 (LLQA…ALSF), 301-321 (LAGM…MVVY), 383-403 (VAYS…YIMM), and 430-450 (IASS…PALF).

Belongs to the TDE1 family.

Its subcellular location is the endoplasmic reticulum membrane. In terms of biological role, enhances the incorporation of serine into phosphatidylserine and sphingolipids. The chain is Probable serine incorporator (serinc) from Nematostella vectensis (Starlet sea anemone).